A 296-amino-acid chain; its full sequence is Ribosomal RNA small subunit methyltransferase H (296 aa).

Residues 38–40 (GVH), glutamate 57, phenylalanine 80, aspartate 103, and histidine 110 each bind S-adenosyl-L-methionine.

The protein belongs to the methyltransferase superfamily. RsmH family.

Its subcellular location is the cytoplasm. The catalysed reaction is cytidine(1402) in 16S rRNA + S-adenosyl-L-methionine = N(4)-methylcytidine(1402) in 16S rRNA + S-adenosyl-L-homocysteine + H(+). Its function is as follows. Specifically methylates the N4 position of cytidine in position 1402 (C1402) of 16S rRNA. This is Ribosomal RNA small subunit methyltransferase H from Borreliella burgdorferi (strain ATCC 35210 / DSM 4680 / CIP 102532 / B31) (Borrelia burgdorferi).